A 436-amino-acid polypeptide reads, in one-letter code: Trigger factor (436 aa).

One can recognise a PPIase FKBP-type domain in the interval 163-248 (DDRIVLDFAG…VKEVAEAVLP (86 aa)).

Belongs to the FKBP-type PPIase family. Tig subfamily.

It is found in the cytoplasm. It carries out the reaction [protein]-peptidylproline (omega=180) = [protein]-peptidylproline (omega=0). Functionally, involved in protein export. Acts as a chaperone by maintaining the newly synthesized protein in an open conformation. Functions as a peptidyl-prolyl cis-trans isomerase. The protein is Trigger factor of Bordetella avium (strain 197N).